The chain runs to 96 residues: Mapk-regulated corepressor-interacting protein 1 (96 aa).

2 disordered regions span residues 1–28 (MASS…GSEI) and 76–96 (AFKP…AKKS). Residues 79–83 (PVDLS) carry the PXDLS motif motif. Over residues 81–96 (DLSDLKRRNTQDAKKS) the composition is skewed to basic and acidic residues.

This sequence belongs to the MCRIP family.

The protein resides in the nucleus. It localises to the cytoplasm. It is found in the stress granule. May play a role in the regulation of the epithelial-mesenchymal transition. This is Mapk-regulated corepressor-interacting protein 1 (MCRIP1) from Gallus gallus (Chicken).